The primary structure comprises 2208 residues: RNA-directed RNA polymerase L (2208 aa).

The interval 26-284 is endonuclease; it reads KDALLSQVHP…LHQDSDTINC (259 aa). The Mn(2+) site is built by glutamate 51, aspartate 89, and glutamate 102. Residue lysine 115 is part of the active site. In terms of domain architecture, RdRp catalytic spans 1171 to 1367; sequence CDMKMAVNNG…YLSSKLNKFV (197 aa). Aspartate 1329 serves as a coordination point for Mg(2+).

Belongs to the Bunyavirales RNA polymerase family. As to quaternary structure, homomultimer; the oligomeric structure is essential for the polymerase activity. Interacts with nucleoprotein N. Interacts with protein Z; this interaction inhibits viral transcription and replication, Z partially blocks the product exit tunnel for the releasing nascent RNA product. Mn(2+) serves as cofactor. The cofactor is Mg(2+).

The protein localises to the virion. The protein resides in the host cytoplasm. It carries out the reaction RNA(n) + a ribonucleoside 5'-triphosphate = RNA(n+1) + diphosphate. In terms of biological role, RNA-dependent RNA polymerase, which is responsible for the replication and transcription of the viral RNA genome using antigenomic RNA as an intermediate. During transcription, synthesizes subgenomic RNAs and assures their capping by a cap-snatching mechanism, which involves the endonuclease activity cleaving the host capped pre-mRNAs. These short capped RNAs are then used as primers for viral transcription. The 3'-end of subgenomic mRNAs molecules are heterogeneous and not polyadenylated. The replicase function is to direct synthesis of antigenomic and genomic RNA which are encapsidated and non capped. As a consequence of the use of the same enzyme for both transcription and replication, these mechanisms need to be well coordinated. These processes may be regulated by proteins N and Z in a dose-dependent manner. Z protein inhibits the viral polymerase L und thus the viral transcription and RNA synthesis. The chain is RNA-directed RNA polymerase L from Homo sapiens (Human).